A 458-amino-acid polypeptide reads, in one-letter code: Maturase-like protein 1 (458 aa).

This sequence to group II intron maturases.

The protein resides in the plastid. It localises to the chloroplast. In terms of biological role, could be required for group III intron excision. The polypeptide is Maturase-like protein 1 (mat1) (Euglena gracilis).